The following is a 199-amino-acid chain: Golgi to ER traffic protein 1 (199 aa).

The Lumenal segment spans residues 1-11 (MLLPDLHPYTI). Residues 12 to 31 (LLSIFLVLVVKQLVATIGKS) traverse the membrane as a helical segment. Residues 32–115 (TIQEFVWLVY…SIDKASNALI (84 aa)) lie on the Cytoplasmic side of the membrane. The stretch at 76–116 (YAKWTKLNRQADKLSAELQKLNQEIQQQKSSIDKASNALIL) forms a coiled coil. The chain crosses the membrane as a helical span at residues 116-136 (LVLTTLPIWIARVFYRKTHLF). Topologically, residues 137 to 160 (YIRQGIFPKYVEWVLALPFLPNGA) are lumenal. The helical transmembrane segment at 161–177 (VGLTIWMFAVNSVVSNF) threads the bilayer. Residues 178 to 199 (SFLVSFPFAKRVSKPVRDTKVE) are Cytoplasmic-facing.

It belongs to the WRB/GET1 family. As to quaternary structure, component of the Golgi to ER traffic (GET) complex, which is composed of GET1, GET2 and GET3. Within the complex, GET1 and GET2 form a heterotetramer which is stabilized by phosphatidylinositol binding and which binds to the GET3 homodimer.

It localises to the endoplasmic reticulum membrane. It is found in the golgi apparatus membrane. Required for the post-translational delivery of tail-anchored (TA) proteins to the endoplasmic reticulum. Together with GET2, acts as a membrane receptor for soluble GET3, which recognizes and selectively binds the transmembrane domain of TA proteins in the cytosol. The GET complex cooperates with the HDEL receptor ERD2 to mediate the ATP-dependent retrieval of resident ER proteins that contain a C-terminal H-D-E-L retention signal from the Golgi to the ER. This Candida albicans (strain WO-1) (Yeast) protein is Golgi to ER traffic protein 1.